A 180-amino-acid polypeptide reads, in one-letter code: Large ribosomal subunit protein uL5 (180 aa).

This sequence belongs to the universal ribosomal protein uL5 family. Part of the 50S ribosomal subunit; part of the 5S rRNA/L5/L18/L25 subcomplex. Contacts the 5S rRNA and the P site tRNA. Forms a bridge to the 30S subunit in the 70S ribosome.

This is one of the proteins that bind and probably mediate the attachment of the 5S RNA into the large ribosomal subunit, where it forms part of the central protuberance. In the 70S ribosome it contacts protein S13 of the 30S subunit (bridge B1b), connecting the 2 subunits; this bridge is implicated in subunit movement. Contacts the P site tRNA; the 5S rRNA and some of its associated proteins might help stabilize positioning of ribosome-bound tRNAs. This Ruminiclostridium cellulolyticum (strain ATCC 35319 / DSM 5812 / JCM 6584 / H10) (Clostridium cellulolyticum) protein is Large ribosomal subunit protein uL5.